Consider the following 492-residue polypeptide: Proline--tRNA ligase (492 aa).

Belongs to the class-II aminoacyl-tRNA synthetase family. ProS type 3 subfamily. As to quaternary structure, homodimer.

The protein resides in the cytoplasm. The catalysed reaction is tRNA(Pro) + L-proline + ATP = L-prolyl-tRNA(Pro) + AMP + diphosphate. Its function is as follows. Catalyzes the attachment of proline to tRNA(Pro) in a two-step reaction: proline is first activated by ATP to form Pro-AMP and then transferred to the acceptor end of tRNA(Pro). In Flavobacterium johnsoniae (strain ATCC 17061 / DSM 2064 / JCM 8514 / BCRC 14874 / CCUG 350202 / NBRC 14942 / NCIMB 11054 / UW101) (Cytophaga johnsonae), this protein is Proline--tRNA ligase.